The sequence spans 555 residues: MTQTRRDNSRIIRAKHGSELDATHWAAEAPLRMLMNNLDPDVAEKPEELVVYGGIGRAARDWESYDRIVATLKRLKEDETLLVQSGKPVGVFRTHKDAPRVLIANSNLVPNWANWDHFRELDKKGLMMYGQMTAGSWIYIGSQGIVQGTYETFVEAGRQHYDGDLTGKWILTGGLGGMGGAQPLAATMAGASMLAVECQPSRIEMRLKTGYLDKSATTLDEALEIINAACAKGEAVSVGLLGNAAEVFPELVKRGVKPDMVTDQTSAHDPANGYLPAGWTLAEWDEKRESDPAAVEAAAKASMAEQVKAMLAFWEQGIPTLDYGNNIRQMAFDEGVTNAFDFPGFVPAYIRPLFCRGIGPFRWAALSGDPEDIYKTDAKVKELIPDNPHLHRWLDMARERIHFQGLPARICWVGLGERHKLGLAFNEMVRTGELSAPVVIGRDHLDSGSVASPNRETEAMMDGSDAVADWPLLNALLNTASGATWVSLHHGGGVGMGYSLHSGQVVLADGTVEAAERVGRVLWNDPGTGVMRHADAGYEIAKDCAKEQGLDLPSV.

NAD(+) contacts are provided by residues 53–54 (GG), Q131, 177–179 (GMG), E197, R202, 243–244 (NA), 264–268 (QTSAH), 274–275 (YL), and Y323. C411 is an active-site residue. G493 provides a ligand contact to NAD(+).

Belongs to the urocanase family. NAD(+) is required as a cofactor.

The protein localises to the cytoplasm. The enzyme catalyses 4-imidazolone-5-propanoate = trans-urocanate + H2O. Its pathway is amino-acid degradation; L-histidine degradation into L-glutamate; N-formimidoyl-L-glutamate from L-histidine: step 2/3. Catalyzes the conversion of urocanate to 4-imidazolone-5-propionate. The polypeptide is Urocanate hydratase (Maricaulis maris (strain MCS10) (Caulobacter maris)).